A 110-amino-acid chain; its full sequence is UPF0060 membrane protein Ping_0587 (110 aa).

Transmembrane regions (helical) follow at residues 6–26, 33–53, 61–81, and 87–107; these read IFGI…LPYL, SIWL…LLTL, TYAA…WLVE, and MTDL…MFGP.

This sequence belongs to the UPF0060 family.

The protein resides in the cell inner membrane. The polypeptide is UPF0060 membrane protein Ping_0587 (Psychromonas ingrahamii (strain DSM 17664 / CCUG 51855 / 37)).